A 624-amino-acid polypeptide reads, in one-letter code: Chaperone protein HtpG (624 aa).

The interval 1-336 (MKGQETRGFQ…SNDLPLNVSR (336 aa)) is a; substrate-binding. The interval 337-552 (EILQDSSITR…NDEMSTQMAK (216 aa)) is b. Positions 553-624 (LFAAAGQAVP…IRRMNQLLVS (72 aa)) are c.

The protein belongs to the heat shock protein 90 family. In terms of assembly, homodimer.

Its subcellular location is the cytoplasm. In terms of biological role, molecular chaperone. Has ATPase activity. The chain is Chaperone protein HtpG from Cronobacter sakazakii (strain ATCC BAA-894) (Enterobacter sakazakii).